Reading from the N-terminus, the 525-residue chain is MTENIHKHRILILDFGSQYTQLVARRVRELGVYCELWAWDVTEAQIRDFNPSGIILSGGPESTTEENSPRAPQYVFEAGVPVFGVCYGMQTMAMQLGGHVEASNEREFGYAQVEVVNDSALVRGIEDALTADGKPLLDVWMSHGDKVTAIPSDFVTVASTESCPFAIMANEEKRFYGVQFHPEVTHTRQGMHMLERFVRDICQCEALWTPAKIIDDAVARIREQVGDDKVILGLSGGVDSSVTAMLLHRAIGKNLTCVFVDNGLLRLNEAEQVLDMFGDHFGLNIVHVPAEDRFLSALAGENDPEAKRKIIGRVFVEVFDEEALKLEDVKWLAQGTIYPDVIESAASATGKAHVIKSHHNVGGLPKEMKMGLVEPLKELFKDEVRKIGLELGLPYDMLYRHPFPGPGLGVRVLGEVKKEYCDLLRRADAIFIEELRKADLYDKVSQAFTVFLPVRSVGVMGDGRKYDWVVSLRAVETIDFMTAHWAHLPYDFLGRVSNRIINEVNGISRVVYDISGKPPATIEWE.

Residues 9–207 (RILILDFGSQ…VRDICQCEAL (199 aa)) form the Glutamine amidotransferase type-1 domain. Cys86 serves as the catalytic Nucleophile. Residues His181 and Glu183 contribute to the active site. The GMPS ATP-PPase domain occupies 208 to 400 (WTPAKIIDDA…LGLPYDMLYR (193 aa)). 235–241 (SGGVDSS) serves as a coordination point for ATP.

As to quaternary structure, homodimer.

It catalyses the reaction XMP + L-glutamine + ATP + H2O = GMP + L-glutamate + AMP + diphosphate + 2 H(+). It participates in purine metabolism; GMP biosynthesis; GMP from XMP (L-Gln route): step 1/1. In terms of biological role, catalyzes the synthesis of GMP from XMP. This is GMP synthase [glutamine-hydrolyzing] from Shigella boydii serotype 4 (strain Sb227).